We begin with the raw amino-acid sequence, 590 residues long: Vesicular glutamate transporter 3 (590 aa).

The Cytoplasmic portion of the chain corresponds to 1–76 (MPLGGFAGLK…CGCFGLPKRY (76 aa)). The chain crosses the membrane as a helical span at residues 77 to 97 (IIAMLSGLGFCISFGIRCNLG). Residues 98–130 (VAIVEMVNNNTVYINGTAVMQPAQFNWDPETVG) lie on the Vesicular side of the membrane. 2 N-linked (GlcNAc...) asparagine glycosylation sites follow: asparagine 106 and asparagine 112. A helical transmembrane segment spans residues 131–151 (LIHGSFFWGYIVTQIPGGFIS). Residues 152–153 (NK) lie on the Cytoplasmic side of the membrane. A helical transmembrane segment spans residues 154 to 174 (LAANRVFGAAIFLTSVLNMFI). At 175 to 182 (PSAARVHY) the chain is on the vesicular side. Residues 183–203 (GCVMFVRILQGLVEGVTYPAC) traverse the membrane as a helical segment. Residues 204–221 (HGMWSKWAPPLERSRLAT) are Cytoplasmic-facing. Residues 222–242 (TSFCGSYAGAVIAMPLAGILV) form a helical membrane-spanning segment. At 243-249 (QYVGWPS) the chain is on the vesicular side. The helical transmembrane segment at 250 to 270 (VFYIYGVFGIIWYIFWILLAY) threads the bilayer. Over 271–315 (NSPAVHPTISEEERNYIETSIGEGANLMSSTEKFKTPWREFFTSM) the chain is Cytoplasmic. The helical transmembrane segment at 316-336 (PVYAIIVANFCRSWTFYLLLI) threads the bilayer. The Vesicular segment spans residues 337–354 (SQPAYFEEVFGFPISKVG). A helical membrane pass occupies residues 355–375 (ILSAVPHMVMTIIVPIGGQLA). Residues 376 to 391 (DFLRSRKILSTTTVRK) lie on the Cytoplasmic side of the membrane. A helical transmembrane segment spans residues 392-412 (IMNCGGFGMEATLLLVVGFSH). At 413–414 (TR) the chain is on the vesicular side. A helical membrane pass occupies residues 415 to 435 (AVAISFLILAVGFSGFAISGF). The Cytoplasmic portion of the chain corresponds to 436–448 (NVNHLDIAPRYAS). A helical transmembrane segment spans residues 449–469 (ILMGISNGVGTLSGMVCPLIV). The Vesicular portion of the chain corresponds to 470 to 482 (GALTKHKTRLEWQ). A helical membrane pass occupies residues 483–503 (HVFVIASMVHYTGVIFYAIFA). Over 504–587 (SGEKQDWADP…NHYENGEYQT (84 aa)) the chain is Cytoplasmic. The segment covering 526 to 535 (EDELADETEP) has biased composition (acidic residues). The tract at residues 526–590 (EDELADETEP…ENGEYQTQYQ (65 aa)) is disordered. The span at 536-557 (SSDSGLATRQKTYGTTDNSSGR) shows a compositional bias: polar residues.

The protein belongs to the major facilitator superfamily. Sodium/anion cotransporter family. VGLUT subfamily.

The protein localises to the cytoplasmic vesicle. Its subcellular location is the secretory vesicle. It localises to the synaptic vesicle membrane. It is found in the cell membrane. The protein resides in the synapse. The protein localises to the synaptosome. The enzyme catalyses L-glutamate(out) = L-glutamate(in). It carries out the reaction 3 Na(+)(out) + phosphate(out) = 3 Na(+)(in) + phosphate(in). It catalyses the reaction chloride(in) = chloride(out). With respect to regulation, the L-glutamate uniporter activity exhibits a biphasic dependence on chloride concentration. Chloride channel activity is allosterically activated by lumenal H(+) and Cl(-) leading to synaptic vesicles acidification. The glutamate transport activity is allosterically activated by lumenal H(+) and Cl(-), preventing non-vesicular L-glutamate release. Functionally, multifunctional transporter that transports L-glutamate as well as multiple ions such as chloride, sodium and phosphate. At the synaptic vesicle membrane, mainly functions as an uniporter that mediates the uptake of L-glutamate into synaptic vesicles at presynaptic nerve terminals of excitatory neural cells. The L-glutamate uniporter activity is electrogenic and is driven by the proton electrochemical gradient, mainly by the electrical gradient established by the vacuolar H(+)-ATPase across the synaptic vesicle membrane. In addition, functions as a chloride channel that allows a chloride permeation through the synaptic vesicle membrane that affects the proton electrochemical gradient and promotes synaptic vesicles acidification. At the plasma membrane, following exocytosis, functions as a symporter of Na(+) and phosphate from the extracellular space to the cytoplasm allowing synaptic phosphate homeostasis regulation. The symporter activity is electrogenic. Moreover, operates synergistically with SLC18A3/VACHT under a constant H(+) gradient, thereby allowing striatal vesicular acetylcholine uptake. This is Vesicular glutamate transporter 3 from Danio rerio (Zebrafish).